We begin with the raw amino-acid sequence, 478 residues long: GTPase Obg (478 aa).

The Obg domain occupies 2-159 (TTFVDRVELH…RDIVLELKTV (158 aa)). The disordered stretch occupies residues 61–87 (HHSPHRKATNGQPGAGDNRSGKDGQDL). The OBG-type G domain maps to 160–330 (ADVALVGYPS…LSFALAGIIA (171 aa)). GTP contacts are provided by residues 166 to 173 (GYPSAGKS), 191 to 195 (FTTLV), 212 to 215 (DVPG), 282 to 285 (NKVD), and 311 to 313 (SAI). 2 residues coordinate Mg(2+): S173 and T193. The 83-residue stretch at 348–430 (PRAVDDAGFT…ENAVVFDWEP (83 aa)) folds into the OCT domain. The segment at 436 to 478 (AEMLGRRGEDHRLEEPRPAAQRRRERDAERDDAEKEYDEFDPF) is disordered. Residues 439–468 (LGRRGEDHRLEEPRPAAQRRRERDAERDDA) are compositionally biased toward basic and acidic residues. Acidic residues predominate over residues 469 to 478 (EKEYDEFDPF).

Belongs to the TRAFAC class OBG-HflX-like GTPase superfamily. OBG GTPase family. As to quaternary structure, monomer. Mg(2+) serves as cofactor.

The protein localises to the cytoplasm. In terms of biological role, an essential GTPase which binds GTP, GDP and possibly (p)ppGpp with moderate affinity, with high nucleotide exchange rates and a fairly low GTP hydrolysis rate. Plays a role in control of the cell cycle, stress response, ribosome biogenesis and in those bacteria that undergo differentiation, in morphogenesis control. The sequence is that of GTPase Obg from Streptomyces griseus subsp. griseus (strain JCM 4626 / CBS 651.72 / NBRC 13350 / KCC S-0626 / ISP 5235).